Reading from the N-terminus, the 411-residue chain is GTPase Obg (411 aa).

The 157-residue stretch at 1-157 (MQFIDEARFV…REIRLELRVL (157 aa)) folds into the Obg domain. The disordered stretch occupies residues 20–45 (AVSFHREKYRPRGGPDGGRGGDGGSV). Residues 33–43 (GPDGGRGGDGG) show a composition bias toward gly residues. The OBG-type G domain occupies 158–330 (SDVGLVGLPN…LERSAEAAPR (173 aa)). Residues 164–171 (GLPNAGKS), 189–193 (FTTLT), 212–215 (DIPG), 276–279 (NKVD), and 311–313 (ARL) each bind GTP. S171 and T191 together coordinate Mg(2+). Residues 335–411 (VFRPSWRGLR…RIGDVSFEFR (77 aa)) form the OCT domain.

This sequence belongs to the TRAFAC class OBG-HflX-like GTPase superfamily. OBG GTPase family. In terms of assembly, monomer. Requires Mg(2+) as cofactor.

It is found in the cytoplasm. Functionally, an essential GTPase which binds GTP, GDP and possibly (p)ppGpp with moderate affinity, with high nucleotide exchange rates and a fairly low GTP hydrolysis rate. Plays a role in control of the cell cycle, stress response, ribosome biogenesis and in those bacteria that undergo differentiation, in morphogenesis control. The protein is GTPase Obg of Rubrobacter xylanophilus (strain DSM 9941 / JCM 11954 / NBRC 16129 / PRD-1).